Here is a 379-residue protein sequence, read N- to C-terminus: RIB43A-like with coiled-coils protein 1 (379 aa).

Coiled coils occupy residues 43 to 111 (EALN…RCEL) and 285 to 337 (IRKV…EFRR).

The protein belongs to the RIB43A family. As to quaternary structure, microtubule inner protein component of sperm flagellar doublet microtubules.

The protein localises to the cytoplasm. The protein resides in the cytoskeleton. Its subcellular location is the flagellum axoneme. This is RIB43A-like with coiled-coils protein 1 (RIBC1) from Bos taurus (Bovine).